The primary structure comprises 134 residues: Small ribosomal subunit protein uS8c (134 aa).

It belongs to the universal ribosomal protein uS8 family. In terms of assembly, part of the 30S ribosomal subunit.

The protein localises to the plastid. In terms of biological role, one of the primary rRNA binding proteins, it binds directly to 16S rRNA central domain where it helps coordinate assembly of the platform of the 30S subunit. This is Small ribosomal subunit protein uS8c (rps8) from Cuscuta obtusiflora (Peruvian dodder).